Reading from the N-terminus, the 117-residue chain is Large ribosomal subunit protein bL20 (117 aa).

It belongs to the bacterial ribosomal protein bL20 family.

Binds directly to 23S ribosomal RNA and is necessary for the in vitro assembly process of the 50S ribosomal subunit. It is not involved in the protein synthesizing functions of that subunit. In Pelotomaculum thermopropionicum (strain DSM 13744 / JCM 10971 / SI), this protein is Large ribosomal subunit protein bL20.